Consider the following 63-residue polypeptide: Large ribosomal subunit protein bL35 (63 aa).

This sequence belongs to the bacterial ribosomal protein bL35 family.

The polypeptide is Large ribosomal subunit protein bL35 (Sulfurimonas denitrificans (strain ATCC 33889 / DSM 1251) (Thiomicrospira denitrificans (strain ATCC 33889 / DSM 1251))).